Reading from the N-terminus, the 452-residue chain is Protein henna (452 aa).

In terms of domain architecture, ACT spans Phe36–Ser107. Phosphoserine; by CaMK2 is present on Ser272. Residues His284, His289, and Glu329 each contribute to the Fe cation site.

Belongs to the biopterin-dependent aromatic amino acid hydroxylase family. The cofactor is Fe(2+). In terms of tissue distribution, phenylalanine hydrolase activity is found in yolk granules of embryos, and female abdomen and fat body tissues. Tryptophan hydroxylase is expressed in serotonergic neurons. Both enzymes are present in cuticular tissues.

It catalyses the reaction (6R)-L-erythro-5,6,7,8-tetrahydrobiopterin + L-phenylalanine + O2 = (4aS,6R)-4a-hydroxy-L-erythro-5,6,7,8-tetrahydrobiopterin + L-tyrosine. It carries out the reaction (6R)-L-erythro-5,6,7,8-tetrahydrobiopterin + L-tryptophan + O2 = 5-hydroxy-L-tryptophan + (4aS,6R)-4a-hydroxy-L-erythro-5,6,7,8-tetrahydrobiopterin. It functions in the pathway amino-acid degradation; L-phenylalanine degradation; acetoacetate and fumarate from L-phenylalanine: step 1/6. N-terminal region of PAH is thought to contain allosteric binding sites for phenylalanine and to constitute an 'inhibitory' domain that regulates the activity of a catalytic domain in the C-terminal portion of the molecule. This is Protein henna (Hn) from Drosophila melanogaster (Fruit fly).